A 334-amino-acid polypeptide reads, in one-letter code: UDP-N-acetylenolpyruvoylglucosamine reductase (334 aa).

Positions 16–186 constitute an FAD-binding PCMH-type domain; that stretch reads INVFAKKIII…LSVGIKLPKT (171 aa). The active site involves arginine 162. The active-site Proton donor is the serine 232. The active site involves glutamate 329.

The protein belongs to the MurB family. FAD is required as a cofactor.

Its subcellular location is the cytoplasm. It carries out the reaction UDP-N-acetyl-alpha-D-muramate + NADP(+) = UDP-N-acetyl-3-O-(1-carboxyvinyl)-alpha-D-glucosamine + NADPH + H(+). It participates in cell wall biogenesis; peptidoglycan biosynthesis. Cell wall formation. The sequence is that of UDP-N-acetylenolpyruvoylglucosamine reductase from Buchnera aphidicola subsp. Baizongia pistaciae (strain Bp).